Reading from the N-terminus, the 182-residue chain is MADSETPYHPDPEDLRRIPVDLFASKKLPGLSSGDLGFADSSEHLVFILRKSSSSLKSLLDSSGVPLFSISRLHNGVWELHKGDVEKRKDLVLTVKRTSKRFSKTESEVSFAGESSENLVIKGVPFQKSCTIYSQDSIVAQTSLMYKLRQIYVGRSKFRLTIFPGSIDHSLVVAMVAIFLQG.

It belongs to the LOR family.

Might be related to the phospholipid scramblase and tubby-like superfamily of membrane tethered transcription factors. This chain is Protein LURP-one-related 7, found in Arabidopsis thaliana (Mouse-ear cress).